The sequence spans 510 residues: Probable cytochrome P450 517A2 (510 aa).

A helical membrane pass occupies residues 1 to 21 (MRILIIIILIIIVFLVKDTIK). C450 provides a ligand contact to heme.

It belongs to the cytochrome P450 family. Heme is required as a cofactor.

Its subcellular location is the membrane. This Dictyostelium discoideum (Social amoeba) protein is Probable cytochrome P450 517A2 (cyp517A2).